The primary structure comprises 537 residues: CTP synthase (537 aa).

The interval 1-265 (MTKFIFVTGG…GKYLIKRLKL (265 aa)) is amidoligase domain. S13 contacts CTP. Residue S13 coordinates UTP. 14–19 (GLGKGI) contacts ATP. Y54 is an L-glutamine binding site. D71 contacts ATP. The Mg(2+) site is built by D71 and E139. Residues 146–148 (DIE), 186–191 (KTKPTQ), and K222 contribute to the CTP site. UTP-binding positions include 186-191 (KTKPTQ) and K222. In terms of domain architecture, Glutamine amidotransferase type-1 spans 290 to 532 (EIAIVGKYVK…VRAAKEYKQE (243 aa)). Position 351 (G351) interacts with L-glutamine. The Nucleophile; for glutamine hydrolysis role is filled by C378. L-glutamine is bound by residues 379 to 382 (FGFQ), E402, and R459. Residues H505 and E507 contribute to the active site.

This sequence belongs to the CTP synthase family. In terms of assembly, homotetramer.

The enzyme catalyses UTP + L-glutamine + ATP + H2O = CTP + L-glutamate + ADP + phosphate + 2 H(+). It carries out the reaction L-glutamine + H2O = L-glutamate + NH4(+). The catalysed reaction is UTP + NH4(+) + ATP = CTP + ADP + phosphate + 2 H(+). Its pathway is pyrimidine metabolism; CTP biosynthesis via de novo pathway; CTP from UDP: step 2/2. Allosterically activated by GTP, when glutamine is the substrate; GTP has no effect on the reaction when ammonia is the substrate. The allosteric effector GTP functions by stabilizing the protein conformation that binds the tetrahedral intermediate(s) formed during glutamine hydrolysis. Inhibited by the product CTP, via allosteric rather than competitive inhibition. Catalyzes the ATP-dependent amination of UTP to CTP with either L-glutamine or ammonia as the source of nitrogen. Regulates intracellular CTP levels through interactions with the four ribonucleotide triphosphates. The protein is CTP synthase of Pyrococcus horikoshii (strain ATCC 700860 / DSM 12428 / JCM 9974 / NBRC 100139 / OT-3).